We begin with the raw amino-acid sequence, 122 residues long: MIQSQTFLNIADNSGARKIMCIRVVGTTYQKYAYIGDIIIAIIKEVVPNTKMEKSEIVRAVVIRTSKEFQRDDGMRIRSDDNAAIIIDQKGNPKGTRVFGPVLQELRQWNFTKIISLAPEVL.

The protein belongs to the universal ribosomal protein uL14 family. In terms of assembly, part of the 50S ribosomal subunit.

It localises to the plastid. The protein resides in the chloroplast. In terms of biological role, binds to 23S rRNA. This chain is Large ribosomal subunit protein uL14c, found in Gnetum parvifolium (Small-leaved jointfir).